A 458-amino-acid chain; its full sequence is Transcription termination factor Rho (458 aa).

Residues 1–23 (MNTTNKESTAELNNTESNNNYNN) are disordered. Positions 10–23 (AELNNTESNNNYNN) are enriched in low complexity. In terms of domain architecture, Rho RNA-BD spans 78 to 153 (LIVGEGVLEV…LKVNRVNFED (76 aa)). ATP is bound by residues 201-206 (GKGQRA), 213-218 (RTGKTV), and R244.

The protein belongs to the Rho family. Homohexamer. The homohexamer assembles into an open ring structure.

In terms of biological role, facilitates transcription termination by a mechanism that involves Rho binding to the nascent RNA, activation of Rho's RNA-dependent ATPase activity, and release of the mRNA from the DNA template. The sequence is that of Transcription termination factor Rho from Rickettsia conorii (strain ATCC VR-613 / Malish 7).